The following is a 516-amino-acid chain: Radial spoke head protein 3 homolog A (516 aa).

Disordered regions lie at residues 1–45, 120–139, and 190–233; these read MAAT…GNPA, STLNQASAMTDPNPRTAEAS, and PTGQ…PVEG. Positions 12–25 are enriched in basic residues; it reads AKKRPLHQRARRPA. The segment covering 120–129 has biased composition (polar residues); sequence STLNQASAMT. Residues 208–217 are compositionally biased toward basic residues; that stretch reads QARRRALARK. Basic and acidic residues predominate over residues 218–233; that stretch reads RAQEQLKPRTPEPVEG. Thr270 is modified (phosphothreonine; by MAPK1). Residues 333–369 are a coiled coil; it reads YEEIRNVELAEVQRLEEQERRHREEKERRKKQQWEIV. Positions 459–516 are disordered; sequence EAMPPGQKTNVINGPNTVTDPSVTTLHTQKPVLDRVSSQPAPSQERKPVEEGGHLMAE. The span at 465 to 486 shows a compositional bias: polar residues; sequence QKTNVINGPNTVTDPSVTTLHT. Residues 502-516 show a composition bias toward basic and acidic residues; the sequence is QERKPVEEGGHLMAE.

Belongs to the flagellar radial spoke RSP3 family. In terms of assembly, may be a component of axonemal radial spokes. Interacts with IQUB. Interacts with phosphorylated MAPK1. Interacts with MEK1. Interacts with PKA regulatory subunits PRKAR1A and PRKAR1B. Interacts with RSPH1. Interacts with RSPH4A. Interacts with RSPH6A. Interacts with RSPH9. Interacts with CFAP61. Interacts with LRRC23.

The protein resides in the cytoplasm. The protein localises to the cytoskeleton. It localises to the cilium axoneme. It is found in the flagellum axoneme. May function as part of axonemal radial spoke complexes that play an important part in the motility of sperm and cilia. Functions as a protein kinase A-anchoring protein that scaffolds the cAMP-dependent protein kinase holoenzyme. May serve as a point of convergence for MAPK and PKA signaling in cilia. The polypeptide is Radial spoke head protein 3 homolog A (Rsph3a) (Mus musculus (Mouse)).